Reading from the N-terminus, the 472-residue chain is Velvet complex subunit umv2 (472 aa).

Composition is skewed to basic and acidic residues over residues 1–10 (MSRSDTDGRD), 29–59 (SQRR…DSHG), 67–80 (YSRD…HRGD), and 89–105 (SYQR…EQER). 3 disordered regions span residues 1 to 121 (MSRS…PLEA), 281 to 327 (CDDG…QFGG), and 433 to 472 (SQGI…EDDE). Residues 106–116 (SYGGASASRSS) show a composition bias toward low complexity. The 284-residue stretch at 158 to 441 (ENGRRYRLVV…ASQGIKIPVR (284 aa)) folds into the Velvet domain. The segment covering 286–298 (RSSTHPQHASEST) has biased composition (polar residues). A compositionally biased stretch (gly residues) spans 456 to 466 (DGMGDYDGASG).

The protein belongs to the velvet family. VelB subfamily. In terms of assembly, component of the heterotrimeric velvet complex composed of laeA, veA and velB; VeA acting as a bridging protein between laeA and velB. Forms a heterodimeric complex with vosA; the formation of the velB-vosA complex is light-dependent.

It is found in the nucleus. Its subcellular location is the cytoplasm. Functionally, component of the velvet transcription factor complex that controls sexual/asexual developmental ratio in response to light, promoting sexual development in the darkness while stimulating asexual sporulation under illumination. The velvet complex acts as a global regulator for secondary metabolite gene expression. Component of the velB-VosA heterodimeric complex that plays a dual role in activating genes associated with spore maturation and repressing certain development-associated genes. The velB-VosA complex binds DNA through the DNA-binding domain of vosA that recognizes an 11-nucleotide consensus sequence 5'-CTGGCCGCGGC-3' consisting of two motifs in the promoters of key developmental regulatory genes. Required for full virulence on seedlings. In Mycosarcoma maydis (Corn smut fungus), this protein is Velvet complex subunit umv2.